The primary structure comprises 103 residues: Integration host factor subunit alpha (103 aa).

The interval 50 to 72 (GNFNLRDKGERPGRNPKTGEEIP) is disordered. Over residues 54–69 (LRDKGERPGRNPKTGE) the composition is skewed to basic and acidic residues.

This sequence belongs to the bacterial histone-like protein family. In terms of assembly, heterodimer of an alpha and a beta chain.

Functionally, this protein is one of the two subunits of integration host factor, a specific DNA-binding protein that functions in genetic recombination as well as in transcriptional and translational control. The sequence is that of Integration host factor subunit alpha from Coxiella burnetii (strain CbuK_Q154) (Coxiella burnetii (strain Q154)).